Consider the following 618-residue polypeptide: Two-component response regulator-like APRR1 (618 aa).

Residues 20–138 (RILLCDNDST…ELLNLWTHMW (119 aa)) form the Response regulatory domain. Composition is skewed to polar residues over residues 161–174 (SDQS…TNLF), 187–200 (NPQR…ENEW), 246–257 (RNSNPAQFSSAP), 324–334 (PKSTVLRTNGQ), and 375–389 (TEQY…QNGA). 5 disordered regions span residues 161–200 (SDQS…ENEW), 239–260 (SHHE…PKKS), 316–338 (TKQA…DPPL), 368–395 (QAHR…PHSL), and 573–618 (VRKM…ALGT). Positions 533-575 (REEALLKFRRKRNQRCFDKKIRYVNRKRLAERRPRVKGQFVRK) constitute a CCT domain. A coiled-coil region spans residues 588–610 (DSADYDDEEEEEEEEEEENRDSS). Residues 590–606 (ADYDDEEEEEEEEEEEN) are compositionally biased toward acidic residues.

Belongs to the ARR-like family. Interacts with PIF1, PIL2, PIF3, PIF4, PIL5, PIL6, ABI3 (via C-terminus), ADO1/ZTL, ADO2, APRR3 and TCP21/CHE. Both the phosphorylated and the dephosphorylated forms interact with ADO1/ZLT. In terms of processing, phosphorylated; during the day. Phosphorylation is required for optimal interaction with APRR3. Expressed in leaves, flowers and siliques. Restricted to the vasculature.

Its subcellular location is the nucleus. Functionally, controls photoperiodic flowering response. Component of the circadian clock. Expression of several members of the ARR-like family is controlled by circadian rhythm. The particular coordinated sequential expression of APRR9, APRR7, APRR5, APRR3 and APPR1 result to circadian waves that may be at the basis of the endogenous circadian clock. Positive regulator of CCA1 and LHY expression. The chain is Two-component response regulator-like APRR1 (APRR1) from Arabidopsis thaliana (Mouse-ear cress).